Consider the following 312-residue polypeptide: Dehydrogenase/reductase SDR family member 7C (312 aa).

A signal peptide spans 1-18 (MGVMAMLMLPLLLLGISG). NAD(+) is bound by residues Ser-47, Leu-49, Tyr-192, Lys-196, and Ser-227. The active-site Proton acceptor is the Tyr-192.

This sequence belongs to the short-chain dehydrogenases/reductases (SDR) family.

It localises to the sarcoplasmic reticulum membrane. The enzyme catalyses all-trans-retinol + NAD(+) = all-trans-retinal + NADH + H(+). Functionally, NADH-dependent oxidoreductase which catalyzes the oxidation of all-trans-retinol to all-trans-retinal. Plays a role in the regulation of cardiac and skeletal muscle metabolic functions. Maintains Ca(2+) intracellular homeostasis by repressing Ca(2+) release from the sarcoplasmic reticulum (SR) in myotubes, possibly through local alternations in NAD/NADH or retinol/retinal. Also plays a role in Ca(2+) homeostasis by controlling Ca(2+) overload in the cytosol and the SR in myotubes. Involved in glucose uptake into skeletal muscles and muscle performance by activating PI3K and mTORC2-mediated AKT1 phosphorylation signaling pathways, possibly through the action of its downstream catalytic product all-trans-retinoic acid. The chain is Dehydrogenase/reductase SDR family member 7C from Homo sapiens (Human).